A 216-amino-acid chain; its full sequence is tRNA (guanine-N(7)-)-methyltransferase (216 aa).

Residues Glu43, Asp68, Asn95, and Asn117 each contribute to the S-adenosyl-L-methionine site. Substrate-binding positions include Asp153 and 190 to 193 (TEYE).

It belongs to the class I-like SAM-binding methyltransferase superfamily. TrmB family.

It catalyses the reaction guanosine(46) in tRNA + S-adenosyl-L-methionine = N(7)-methylguanosine(46) in tRNA + S-adenosyl-L-homocysteine. Its pathway is tRNA modification; N(7)-methylguanine-tRNA biosynthesis. Its function is as follows. Catalyzes the formation of N(7)-methylguanine at position 46 (m7G46) in tRNA. The sequence is that of tRNA (guanine-N(7)-)-methyltransferase from Desulfitobacterium hafniense (strain Y51).